Consider the following 354-residue polypeptide: Ferrochelatase (354 aa).

Positions 214 and 295 each coordinate Fe cation.

This sequence belongs to the ferrochelatase family.

Its subcellular location is the cytoplasm. The enzyme catalyses heme b + 2 H(+) = protoporphyrin IX + Fe(2+). Its pathway is porphyrin-containing compound metabolism; protoheme biosynthesis; protoheme from protoporphyrin-IX: step 1/1. Its function is as follows. Catalyzes the ferrous insertion into protoporphyrin IX. This chain is Ferrochelatase, found in Burkholderia cenocepacia (strain HI2424).